Reading from the N-terminus, the 272-residue chain is Phosphoglycolate phosphatase 1 (272 aa).

Aspartate 19 (nucleophile) is an active-site residue. Mg(2+) contacts are provided by aspartate 19, aspartate 21, and aspartate 182.

It belongs to the HAD-like hydrolase superfamily. CbbY/CbbZ/Gph/YieH family. Requires Mg(2+) as cofactor.

The enzyme catalyses 2-phosphoglycolate + H2O = glycolate + phosphate. It participates in organic acid metabolism; glycolate biosynthesis; glycolate from 2-phosphoglycolate: step 1/1. Its function is as follows. Specifically catalyzes the dephosphorylation of 2-phosphoglycolate. Is involved in the dissimilation of the intracellular 2-phosphoglycolate formed during the DNA repair of 3'-phosphoglycolate ends, a major class of DNA lesions induced by oxidative stress. The chain is Phosphoglycolate phosphatase 1 from Pseudomonas aeruginosa (strain ATCC 15692 / DSM 22644 / CIP 104116 / JCM 14847 / LMG 12228 / 1C / PRS 101 / PAO1).